Reading from the N-terminus, the 372-residue chain is Dual-specificity RNA methyltransferase RlmN (372 aa).

The active-site Proton acceptor is E97. The Radical SAM core domain maps to 103 to 340 (ETDRKTLCVS…AVVRKNRGTD (238 aa)). C110 and C345 are oxidised to a cystine. [4Fe-4S] cluster-binding residues include C117, C121, and C124. S-adenosyl-L-methionine-binding positions include 172-173 (GE), S204, 226-228 (SLN), and N302. C345 functions as the S-methylcysteine intermediate in the catalytic mechanism. Residues 350-372 (AEGGPGDPRRRAAAALTGTPAAG) form a disordered region. Residues 362-372 (AAALTGTPAAG) are compositionally biased toward low complexity.

The protein belongs to the radical SAM superfamily. RlmN family. The cofactor is [4Fe-4S] cluster.

The protein localises to the cytoplasm. It catalyses the reaction adenosine(2503) in 23S rRNA + 2 reduced [2Fe-2S]-[ferredoxin] + 2 S-adenosyl-L-methionine = 2-methyladenosine(2503) in 23S rRNA + 5'-deoxyadenosine + L-methionine + 2 oxidized [2Fe-2S]-[ferredoxin] + S-adenosyl-L-homocysteine. The catalysed reaction is adenosine(37) in tRNA + 2 reduced [2Fe-2S]-[ferredoxin] + 2 S-adenosyl-L-methionine = 2-methyladenosine(37) in tRNA + 5'-deoxyadenosine + L-methionine + 2 oxidized [2Fe-2S]-[ferredoxin] + S-adenosyl-L-homocysteine. Functionally, specifically methylates position 2 of adenine 2503 in 23S rRNA and position 2 of adenine 37 in tRNAs. m2A2503 modification seems to play a crucial role in the proofreading step occurring at the peptidyl transferase center and thus would serve to optimize ribosomal fidelity. The chain is Dual-specificity RNA methyltransferase RlmN from Anaeromyxobacter dehalogenans (strain 2CP-C).